A 484-amino-acid polypeptide reads, in one-letter code: AVTPGSIPNFPFRDCNTTNGAYRLAPVWRPSGSNTYCFKIQVSQDALSCTGACCSADLHKIEFNVCSSCLVAGASVDATVNGVRTRVGATLDKAPAGPVGSAVLRLTQLGLDTTTAQDAEVCLTLKTNRGGQGCTTLDQLCSSPGFPAGTCTAAMFDVACDCCPVSQAGQALPPPPPVIPPVLRPCDVCIAATIVPPANDVRPYRYDSATCAAIQQNIANAMNSLLGGANINVFSPFAPNASQCFDTQIITCGRFNGSDTDALANLTEAVQQQLSAFIGVASGGNVCNPKLEKYTVTVSTINNVADQCLDLSQSASCFLPGVPFPNCTCNTTQGVMPFTVSPTWYAQPANVRWGRNVTEYCFTVNTLQPSQVVPSTCYNANDALAKIEWYASDAFRSAVKGFTVYPAGGSNKTIADSWGATGTDTLKVNLNWNLLQANGGKVCVAIQNPFTMGDICKGALGQCYASIFNRDNSDYCCPIYRTGP.

Residues N16, N240, N256, N265, N326, N330, N356, and N411 are each glycosylated (N-linked (GlcNAc...) asparagine).

It is found in the secreted. The protein localises to the extracellular space. It localises to the extracellular matrix. In terms of biological role, may be involved in conversion of asexual males and females to the sexual pathway. The polypeptide is Perphorin-2 (Volvox carteri (Green alga)).